The following is a 335-amino-acid chain: Tetraacyldisaccharide 4'-kinase (335 aa).

ATP is bound at residue 59 to 66 (TAGGNGKT).

It belongs to the LpxK family.

The catalysed reaction is a lipid A disaccharide + ATP = a lipid IVA + ADP + H(+). It functions in the pathway glycolipid biosynthesis; lipid IV(A) biosynthesis; lipid IV(A) from (3R)-3-hydroxytetradecanoyl-[acyl-carrier-protein] and UDP-N-acetyl-alpha-D-glucosamine: step 6/6. Functionally, transfers the gamma-phosphate of ATP to the 4'-position of a tetraacyldisaccharide 1-phosphate intermediate (termed DS-1-P) to form tetraacyldisaccharide 1,4'-bis-phosphate (lipid IVA). The protein is Tetraacyldisaccharide 4'-kinase of Vibrio parahaemolyticus serotype O3:K6 (strain RIMD 2210633).